The sequence spans 311 residues: Probable cysteine synthase (311 aa).

At K45 the chain carries N6-(pyridoxal phosphate)lysine. Pyridoxal 5'-phosphate-binding positions include N75, 182–186 (GTGGT), and S270.

Belongs to the cysteine synthase/cystathionine beta-synthase family. Pyridoxal 5'-phosphate serves as cofactor.

The catalysed reaction is O-acetyl-L-serine + hydrogen sulfide = L-cysteine + acetate. The protein operates within amino-acid biosynthesis; L-cysteine biosynthesis; L-cysteine from L-serine: step 2/2. This chain is Probable cysteine synthase (ytkP), found in Bacillus subtilis (strain 168).